Here is a 221-residue protein sequence, read N- to C-terminus: MKPAPTTQQELLTRAQQIAGLSFAELADEAGMTVPPDLRKDKGWVGQLLEWHLGATAGSRPQQDFEHLGIELKSIPISYTGKPLETTFVCVAPLTGVHGLTWEQSHVRNKLSKVLWIPVQGEREIPLAERCVGSPLLWSPSPEEEAQLKADWEELMEWIVLGKVAQITAKHGEVLQLRPKAANGRALTEAYGANGRPIKALPRGFYLRTQFTAQILQRYYA.

Belongs to the MutH family.

The protein resides in the cytoplasm. Its function is as follows. Sequence-specific endonuclease that cleaves unmethylated GATC sequences. It is involved in DNA mismatch repair. This is DNA mismatch repair protein MutH from Vibrio cholerae serotype O1 (strain ATCC 39315 / El Tor Inaba N16961).